A 142-amino-acid polypeptide reads, in one-letter code: MADFKLVVSDPKTGKAYNVDVTGPRVNKFIGKPIGSEIDGETAGLPGYKLIITGGSDKDGIPMRGDIPGQVRRRVLVSGGIGYHPTENGMRRRKLLRGDEISAEIVQVNATVAAYGEKPLDELAPKKEKKEGAAGGRAPAKK.

A disordered region spans residues 117-142 (EKPLDELAPKKEKKEGAAGGRAPAKK). Residues 118–132 (KPLDELAPKKEKKEG) are compositionally biased toward basic and acidic residues.

This sequence belongs to the eukaryotic ribosomal protein eS6 family.

The protein is Small ribosomal subunit protein eS6 of Methanocella arvoryzae (strain DSM 22066 / NBRC 105507 / MRE50).